Consider the following 362-residue polypeptide: Aminomethyltransferase (362 aa).

This sequence belongs to the GcvT family. The glycine cleavage system is composed of four proteins: P, T, L and H.

It carries out the reaction N(6)-[(R)-S(8)-aminomethyldihydrolipoyl]-L-lysyl-[protein] + (6S)-5,6,7,8-tetrahydrofolate = N(6)-[(R)-dihydrolipoyl]-L-lysyl-[protein] + (6R)-5,10-methylene-5,6,7,8-tetrahydrofolate + NH4(+). Its function is as follows. The glycine cleavage system catalyzes the degradation of glycine. This Porphyromonas gingivalis (strain ATCC 33277 / DSM 20709 / CIP 103683 / JCM 12257 / NCTC 11834 / 2561) protein is Aminomethyltransferase.